We begin with the raw amino-acid sequence, 395 residues long: MLDQQTIATIKSTIPLLAETGPALTAHFYQRMFHHNPELKDIFNMSNQRNGDQREALFNAICAYATHIENLPALLPAVERIAQKHASFNIQPEQYQIVGTHLLATLEEMFQPGQAVLDAWGKAYGVLANVFIQRESDIYQQSAGQNGGWHGIRPFRIVAKQPQSSLITSFTLEPVDGGPIAAFRPGQYLAVYIRDKRFEYQEIRQYSLTNEPNGRYYRIAVKRETMGSVSGYLHDVAREGDVIELAAPHGDFYLEVTPETPVALISAGVGQTPMLSMLHSLKNQQHQADIFWLHAAENTEVHAFADEIADVAATLPQLQSYVWYREASSEAARSAHAFHGLMALKDLPTPLPMTNLHCYLCGPVAFMQFAARQLLELGITESQIHYECFGPHKVI.

In terms of domain architecture, Globin spans 1–136 (MLDQQTIATI…LANVFIQRES (136 aa)). Residue H85 coordinates heme b. Catalysis depends on charge relay system residues Y95 and E135. The segment at 147-395 (GGWHGIRPFR…YECFGPHKVI (249 aa)) is reductase. Positions 150–255 (HGIRPFRIVA…AAPHGDFYLE (106 aa)) constitute an FAD-binding FR-type domain. FAD-binding positions include Y188 and 204 to 207 (RQYS). 268–273 (GVGQTP) lines the NADP(+) pocket. Residue 388 to 391 (CFGP) coordinates FAD.

It belongs to the globin family. Two-domain flavohemoproteins subfamily. In the C-terminal section; belongs to the flavoprotein pyridine nucleotide cytochrome reductase family. Heme b is required as a cofactor. It depends on FAD as a cofactor.

It is found in the cytoplasm. It carries out the reaction 2 nitric oxide + NADPH + 2 O2 = 2 nitrate + NADP(+) + H(+). The enzyme catalyses 2 nitric oxide + NADH + 2 O2 = 2 nitrate + NAD(+) + H(+). Its function is as follows. Is involved in NO detoxification in an aerobic process, termed nitric oxide dioxygenase (NOD) reaction that utilizes O(2) and NAD(P)H to convert NO to nitrate, which protects the bacterium from various noxious nitrogen compounds. Therefore, plays a central role in the inducible response to nitrosative stress. This chain is Flavohemoprotein (hmp), found in Dickeya dadantii (strain 3937) (Erwinia chrysanthemi (strain 3937)).